Reading from the N-terminus, the 31-residue chain is Protamine-YI (31 aa).

The disordered stretch occupies residues 1-31; it reads ARRRRSSSRPIRRRRPRRRTTRRRRAGRRRR.

In terms of tissue distribution, testis.

It localises to the nucleus. The protein resides in the chromosome. Functionally, protamines substitute for histones in the chromatin of sperm during the haploid phase of spermatogenesis. They compact sperm DNA into a highly condensed, stable and inactive complex. In Clupea harengus (Atlantic herring), this protein is Protamine-YI.